The chain runs to 1363 residues: ABC multidrug transporter MDR2 (1363 aa).

Residues Ile-65–Leu-85 form a helical membrane-spanning segment. Residues Val-69–Ser-367 form the ABC transmembrane type-1 1 domain. Asn-97 is a glycosylation site (N-linked (GlcNAc...) asparagine). 5 helical membrane-spanning segments follow: residues Val-119 to Cys-139, Lys-193 to Leu-213, Val-215 to Gly-235, Ile-301 to Gly-321, and Val-336 to Ser-356. The 280-residue stretch at Ile-403–Leu-682 folds into the ABC transporter 1 domain. Gly-438–Ser-445 contacts ATP. Asn-552 and Asn-633 each carry an N-linked (GlcNAc...) asparagine glycan. The interval Tyr-738–Lys-758 is disordered. 3 helical membrane passes run Leu-781 to Gly-801, Gly-820 to Val-840, and Leu-896 to Ile-916. The ABC transmembrane type-1 2 domain maps to Leu-781–Lys-1052. Asn-973 carries N-linked (GlcNAc...) asparagine glycosylation. The next 2 helical transmembrane spans lie at Phe-992–Gly-1012 and Ile-1016–Ser-1036. The region spanning Val-1119–His-1358 is the ABC transporter 2 domain. An ATP-binding site is contributed by Gly-1154–Ser-1161.

Belongs to the ABC transporter superfamily. ABCB family. Multidrug resistance exporter (TC 3.A.1.201) subfamily.

Its subcellular location is the cell membrane. Its function is as follows. Pleiotropic ABC efflux transporter that may be involved in the modulation susceptibility to a wide range of unrelated cytotoxic compounds. The protein is ABC multidrug transporter MDR2 of Trichophyton tonsurans (strain CBS 112818) (Scalp ringworm fungus).